Consider the following 360-residue polypeptide: Putative F-box protein At3g16210 (360 aa).

Residues 1 to 48 form the F-box domain; sequence MSKFLPEELAIEILVRLSMKDLARFRCVCKTWRDLINDPGFTETYRDM.

This chain is Putative F-box protein At3g16210, found in Arabidopsis thaliana (Mouse-ear cress).